A 437-amino-acid chain; its full sequence is Histidinol dehydrogenase (437 aa).

The NAD(+) site is built by tyrosine 133, glutamine 191, and asparagine 214. 3 residues coordinate substrate: serine 240, glutamine 262, and histidine 265. Zn(2+) is bound by residues glutamine 262 and histidine 265. Residues glutamate 329 and histidine 330 each act as proton acceptor in the active site. Positions 330, 363, 417, and 422 each coordinate substrate. Aspartate 363 lines the Zn(2+) pocket. Position 422 (histidine 422) interacts with Zn(2+).

It belongs to the histidinol dehydrogenase family. In terms of assembly, homodimer. Zn(2+) serves as cofactor.

The enzyme catalyses L-histidinol + 2 NAD(+) + H2O = L-histidine + 2 NADH + 3 H(+). It participates in amino-acid biosynthesis; L-histidine biosynthesis; L-histidine from 5-phospho-alpha-D-ribose 1-diphosphate: step 9/9. In terms of biological role, catalyzes the sequential NAD-dependent oxidations of L-histidinol to L-histidinaldehyde and then to L-histidine. In Blochmanniella floridana, this protein is Histidinol dehydrogenase.